The chain runs to 418 residues: Glutamyl-tRNA reductase (418 aa).

Substrate is bound by residues 49–52, S108, 113–115, and Q119; these read TCNR and EPQ. C50 serves as the catalytic Nucleophile. Residue 188 to 193 coordinates NADP(+); sequence GAGETI.

It belongs to the glutamyl-tRNA reductase family. Homodimer.

It carries out the reaction (S)-4-amino-5-oxopentanoate + tRNA(Glu) + NADP(+) = L-glutamyl-tRNA(Glu) + NADPH + H(+). Its pathway is porphyrin-containing compound metabolism; protoporphyrin-IX biosynthesis; 5-aminolevulinate from L-glutamyl-tRNA(Glu): step 1/2. Its function is as follows. Catalyzes the NADPH-dependent reduction of glutamyl-tRNA(Glu) to glutamate 1-semialdehyde (GSA). The protein is Glutamyl-tRNA reductase of Aliivibrio salmonicida (strain LFI1238) (Vibrio salmonicida (strain LFI1238)).